The following is an 80-amino-acid chain: MIMDDVKATVLSILQDLTGEDVSNNMDANLFDEGILDSMGSVQLLLELQNQLGIEVPVSEFERSEWETPAKIVAKVASLQ.

The Carrier domain occupies 1–80 (MIMDDVKATV…KIVAKVASLQ (80 aa)). S38 carries the O-(pantetheine 4'-phosphoryl)serine modification.

The protein belongs to the DltC family. 4'-phosphopantetheine is transferred from CoA to a specific serine of apo-DCP.

It localises to the cytoplasm. It functions in the pathway cell wall biogenesis; lipoteichoic acid biosynthesis. In terms of biological role, carrier protein involved in the D-alanylation of lipoteichoic acid (LTA). The loading of thioester-linked D-alanine onto DltC is catalyzed by D-alanine--D-alanyl carrier protein ligase DltA. The DltC-carried D-alanyl group is further transferred to cell membrane phosphatidylglycerol (PG) by forming an ester bond, probably catalyzed by DltD. D-alanylation of LTA plays an important role in modulating the properties of the cell wall in Gram-positive bacteria, influencing the net charge of the cell wall. In Lactiplantibacillus plantarum (strain ATCC BAA-793 / NCIMB 8826 / WCFS1) (Lactobacillus plantarum), this protein is D-alanyl carrier protein 2.